Here is a 294-residue protein sequence, read N- to C-terminus: Indole-3-glycerol phosphate synthase (294 aa).

The protein belongs to the TrpC family.

The enzyme catalyses 1-(2-carboxyphenylamino)-1-deoxy-D-ribulose 5-phosphate + H(+) = (1S,2R)-1-C-(indol-3-yl)glycerol 3-phosphate + CO2 + H2O. Its pathway is amino-acid biosynthesis; L-tryptophan biosynthesis; L-tryptophan from chorismate: step 4/5. In Synechococcus sp. (strain RCC307), this protein is Indole-3-glycerol phosphate synthase.